Consider the following 455-residue polypeptide: Bifunctional protein GlmU (455 aa).

The interval methionine 1–arginine 227 is pyrophosphorylase. Residues leucine 8–glycine 11, lysine 22, glutamine 73, glycine 78–threonine 79, tyrosine 100–aspartate 102, glycine 137, glutamate 152, asparagine 167, and asparagine 225 each bind UDP-N-acetyl-alpha-D-glucosamine. Aspartate 102 contacts Mg(2+). Position 225 (asparagine 225) interacts with Mg(2+). The segment at tryptophan 228–alanine 248 is linker. Residues glycine 249–glutamate 455 form an N-acetyltransferase region. UDP-N-acetyl-alpha-D-glucosamine contacts are provided by arginine 332 and lysine 350. Histidine 362 (proton acceptor) is an active-site residue. Tyrosine 365 and asparagine 376 together coordinate UDP-N-acetyl-alpha-D-glucosamine. Residues alanine 379, asparagine 385–tyrosine 386, serine 404, alanine 422, and arginine 439 contribute to the acetyl-CoA site.

This sequence in the N-terminal section; belongs to the N-acetylglucosamine-1-phosphate uridyltransferase family. The protein in the C-terminal section; belongs to the transferase hexapeptide repeat family. As to quaternary structure, homotrimer. The cofactor is Mg(2+).

The protein localises to the cytoplasm. The catalysed reaction is alpha-D-glucosamine 1-phosphate + acetyl-CoA = N-acetyl-alpha-D-glucosamine 1-phosphate + CoA + H(+). It catalyses the reaction N-acetyl-alpha-D-glucosamine 1-phosphate + UTP + H(+) = UDP-N-acetyl-alpha-D-glucosamine + diphosphate. The protein operates within nucleotide-sugar biosynthesis; UDP-N-acetyl-alpha-D-glucosamine biosynthesis; N-acetyl-alpha-D-glucosamine 1-phosphate from alpha-D-glucosamine 6-phosphate (route II): step 2/2. It functions in the pathway nucleotide-sugar biosynthesis; UDP-N-acetyl-alpha-D-glucosamine biosynthesis; UDP-N-acetyl-alpha-D-glucosamine from N-acetyl-alpha-D-glucosamine 1-phosphate: step 1/1. It participates in bacterial outer membrane biogenesis; LPS lipid A biosynthesis. Functionally, catalyzes the last two sequential reactions in the de novo biosynthetic pathway for UDP-N-acetylglucosamine (UDP-GlcNAc). The C-terminal domain catalyzes the transfer of acetyl group from acetyl coenzyme A to glucosamine-1-phosphate (GlcN-1-P) to produce N-acetylglucosamine-1-phosphate (GlcNAc-1-P), which is converted into UDP-GlcNAc by the transfer of uridine 5-monophosphate (from uridine 5-triphosphate), a reaction catalyzed by the N-terminal domain. This chain is Bifunctional protein GlmU, found in Coxiella burnetii (strain RSA 493 / Nine Mile phase I).